We begin with the raw amino-acid sequence, 433 residues long: Ribosomal RNA small subunit methyltransferase B (433 aa).

Residues cysteine 254–lysine 260, aspartate 277, aspartate 303, and aspartate 322 each bind S-adenosyl-L-methionine. Residue cysteine 375 is the Nucleophile of the active site.

The protein belongs to the class I-like SAM-binding methyltransferase superfamily. RsmB/NOP family.

It localises to the cytoplasm. It catalyses the reaction cytidine(967) in 16S rRNA + S-adenosyl-L-methionine = 5-methylcytidine(967) in 16S rRNA + S-adenosyl-L-homocysteine + H(+). In terms of biological role, specifically methylates the cytosine at position 967 (m5C967) of 16S rRNA. The sequence is that of Ribosomal RNA small subunit methyltransferase B from Sodalis glossinidius (strain morsitans).